Here is a 404-residue protein sequence, read N- to C-terminus: Probable tRNA sulfurtransferase (404 aa).

The region spanning 60 to 165 (HEVAESLKEI…DEAAYISYEN (106 aa)) is the THUMP domain. ATP is bound by residues 183–184 (ML), 208–209 (HF), R265, G287, and Q296.

The protein belongs to the ThiI family.

The protein localises to the cytoplasm. The enzyme catalyses [ThiI sulfur-carrier protein]-S-sulfanyl-L-cysteine + a uridine in tRNA + 2 reduced [2Fe-2S]-[ferredoxin] + ATP + H(+) = [ThiI sulfur-carrier protein]-L-cysteine + a 4-thiouridine in tRNA + 2 oxidized [2Fe-2S]-[ferredoxin] + AMP + diphosphate. The catalysed reaction is [ThiS sulfur-carrier protein]-C-terminal Gly-Gly-AMP + S-sulfanyl-L-cysteinyl-[cysteine desulfurase] + AH2 = [ThiS sulfur-carrier protein]-C-terminal-Gly-aminoethanethioate + L-cysteinyl-[cysteine desulfurase] + A + AMP + 2 H(+). The protein operates within cofactor biosynthesis; thiamine diphosphate biosynthesis. Catalyzes the ATP-dependent transfer of a sulfur to tRNA to produce 4-thiouridine in position 8 of tRNAs, which functions as a near-UV photosensor. Also catalyzes the transfer of sulfur to the sulfur carrier protein ThiS, forming ThiS-thiocarboxylate. This is a step in the synthesis of thiazole, in the thiamine biosynthesis pathway. The sulfur is donated as persulfide by IscS. This Streptococcus agalactiae serotype Ia (strain ATCC 27591 / A909 / CDC SS700) protein is Probable tRNA sulfurtransferase.